The following is a 169-amino-acid chain: Disulfide bond formation protein B (169 aa).

Residues 1–13 (MQSLISFAHSRLS) are Cytoplasmic-facing. Residues 14–30 (WGILALSALALESAALY) traverse the membrane as a helical segment. The Periplasmic segment spans residues 31-48 (FQHIMKLDPCVMCIYQRV). A disulfide bridge connects residues Cys-40 and Cys-43. The chain crosses the membrane as a helical span at residues 49–64 (AVFGLLGAGLFGFMAP). The Cytoplasmic segment spans residues 65–71 (ANRVIRA). Residues 72–89 (LGALLWGISAAWGLKLAL) form a helical membrane-spanning segment. Residues 90–144 (ELVDMQNNPNPFSTCSFLPEFPSWLQLHEWLPSVFMPTGMCTDIPWEFAGVTMGE) lie on the Periplasmic side of the membrane. Residues Cys-104 and Cys-130 are joined by a disulfide bond. Residues 145 to 163 (WMIVAFSVYLLAWLAFIVP) traverse the membrane as a helical segment. Topologically, residues 164–169 (MLKKSA) are cytoplasmic.

Belongs to the DsbB family.

The protein localises to the cell inner membrane. Its function is as follows. Required for disulfide bond formation in some periplasmic proteins. Acts by oxidizing the DsbA protein. The polypeptide is Disulfide bond formation protein B (Shewanella amazonensis (strain ATCC BAA-1098 / SB2B)).